The sequence spans 166 residues: Large ribosomal subunit protein uL11 (166 aa).

An N5-methylarginine modification is found at Arg67.

Belongs to the universal ribosomal protein uL11 family.

This is Large ribosomal subunit protein uL11 (RPL12) from Encephalitozoon cuniculi (strain GB-M1) (Microsporidian parasite).